Here is a 256-residue protein sequence, read N- to C-terminus: Coiled-coil domain-containing protein 90B, mitochondrial (256 aa).

The transit peptide at 1-42 (MRSRWIWRFLRPDGGGIRWTSTPHGRLSPALRRGFLTTTTKS) directs the protein to the mitochondrion. Positions 129–167 (LEKSEFANLRAENEKMKIELDQVKQQLTNETSRIRADNK) form a coiled coil. A helical membrane pass occupies residues 231-253 (TIRYLAASVFTCLAIALGFYRFW).

Belongs to the CCDC90 family. In terms of assembly, interacts with MCU.

It is found in the mitochondrion membrane. This chain is Coiled-coil domain-containing protein 90B, mitochondrial (Ccdc90b), found in Mus musculus (Mouse).